The following is a 445-amino-acid chain: Methionine aminopeptidase 2 (445 aa).

Residues 1–76 form a disordered region; the sequence is MAAQVASGVG…KKKCTSKVQT (76 aa). A compositionally biased stretch (basic residues) spans 57-71; sequence AKKKKKKTKKKKKCT. Histidine 195 serves as a coordination point for substrate. Positions 215, 226, and 295 each coordinate a divalent metal cation. A substrate-binding site is contributed by histidine 303. A divalent metal cation-binding residues include glutamate 331 and glutamate 426.

Belongs to the peptidase M24A family. Methionine aminopeptidase eukaryotic type 2 subfamily. Requires Co(2+) as cofactor. Zn(2+) is required as a cofactor. The cofactor is Mn(2+). It depends on Fe(2+) as a cofactor.

The protein localises to the cytoplasm. It carries out the reaction Release of N-terminal amino acids, preferentially methionine, from peptides and arylamides.. Functionally, cotranslationally removes the N-terminal methionine from nascent proteins. The N-terminal methionine is often cleaved when the second residue in the primary sequence is small and uncharged (Met-Ala-, Cys, Gly, Pro, Ser, Thr, or Val). The sequence is that of Methionine aminopeptidase 2 from Paracoccidioides lutzii (strain ATCC MYA-826 / Pb01) (Paracoccidioides brasiliensis).